Reading from the N-terminus, the 880-residue chain is Alanine--tRNA ligase (880 aa).

H567, H571, C669, and H673 together coordinate Zn(2+).

It belongs to the class-II aminoacyl-tRNA synthetase family. It depends on Zn(2+) as a cofactor.

The protein localises to the cytoplasm. It carries out the reaction tRNA(Ala) + L-alanine + ATP = L-alanyl-tRNA(Ala) + AMP + diphosphate. Functionally, catalyzes the attachment of alanine to tRNA(Ala) in a two-step reaction: alanine is first activated by ATP to form Ala-AMP and then transferred to the acceptor end of tRNA(Ala). Also edits incorrectly charged Ser-tRNA(Ala) and Gly-tRNA(Ala) via its editing domain. This Bacillus anthracis protein is Alanine--tRNA ligase.